The following is a 589-amino-acid chain: Enhancer of polycomb-like protein 1 (589 aa).

Disordered regions lie at residues 298 to 339, 403 to 430, 468 to 497, and 516 to 589; these read GDED…RPAE, MTPPASASSGSMDEPTPMDLDKPKPNPP, LPSPARDLSEEQSDRWKYDQSSDDEDDAPV, and LQTV…QPVS. The span at 474-487 shows a compositional bias: basic and acidic residues; it reads DLSEEQSDRWKYDQ. Residues 557–566 are compositionally biased toward low complexity; that stretch reads PQPNQSQSLP. Over residues 567–589 the composition is skewed to pro residues; the sequence is LPQPQQPVAQPQPQPQPQAQPVS.

The protein belongs to the enhancer of polycomb family. Component of the NuA4 histone acetyltransferase complex.

The protein resides in the nucleus. Functionally, component of the NuA4 histone acetyltransferase complex which is involved in transcriptional activation of selected genes principally by acetylation of nucleosomal histone H4 and H2A. The NuA4 complex is also involved in DNA repair. Involved in gene silencing by neighboring heterochromatin, blockage of the silencing spreading along the chromosome, and required for cell cycle progression through G2/M. The protein is Enhancer of polycomb-like protein 1 (epl-1) of Neurospora crassa (strain ATCC 24698 / 74-OR23-1A / CBS 708.71 / DSM 1257 / FGSC 987).